The primary structure comprises 614 residues: Sorting nexin-18 (614 aa).

One can recognise an SH3 domain in the interval 1–61; the sequence is MALRARALYD…PASYVQVIRA (61 aa). A disordered region spans residues 85 to 218; that stretch reads GFEPLPAAPP…SQELGHGEPQ (134 aa). The span at 90 to 101 shows a compositional bias: pro residues; sequence PAAPPAAFPPLL. Residues 141–151 show a composition bias toward acidic residues; the sequence is SDDDWDDEWDD. In terms of domain architecture, PX spans 266 to 376; that stretch reads FQCTIDDPTK…HFLTCPSSTD (111 aa). Positions 302, 304, and 342 each coordinate a 1,2-diacyl-sn-glycero-3-phospho-(1D-myo-inositol-4,5-bisphosphate). One can recognise a BAR domain in the interval 411–614; sequence LQEVESKIDG…EEALHKYDSV (204 aa).

It belongs to the sorting nexin family. As to quaternary structure, heterodimer with SNX9. Interacts with ITCH. Interacts with dynamin-2 (DNM2), SYNJ1 and WASL. Interacts with the AP-1 complex. Interacts with FCHSD1 (via the F-BAR domain).

The protein resides in the endomembrane system. Its subcellular location is the endosome membrane. It localises to the recycling endosome membrane. It is found in the cell membrane. The protein localises to the cytoplasmic vesicle membrane. Involved in endocytosis and intracellular vesicle trafficking, both during interphase and at the end of mitosis. Required for efficient progress through mitosis and cytokinesis. Required for normal formation of the cleavage furrow at the end of mitosis. Plays a role in endocytosis via clathrin-coated pits, but also clathrin-independent, actin-dependent fluid-phase endocytosis. Plays a role in macropinocytosis. Binds to membranes enriched in phosphatidylinositol 4,5-bisphosphate and promotes membrane tubulation. Stimulates the GTPase activity of DNM2. Promotes DNM2 location at the plasma membrane. Together with DNM2, involved in autophagosome assembly by regulating trafficking from recycling endosomes of phospholipid scramblase ATG9A. The chain is Sorting nexin-18 from Mus musculus (Mouse).